The primary structure comprises 136 residues: Large ribosomal subunit protein bL21 (136 aa).

The interval 107 to 136 (RAAADRKTAPKRASAKAAADQTTAAQATAE) is disordered. Over residues 121-136 (AKAAADQTTAAQATAE) the composition is skewed to low complexity.

Belongs to the bacterial ribosomal protein bL21 family. As to quaternary structure, part of the 50S ribosomal subunit. Contacts protein L20.

This protein binds to 23S rRNA in the presence of protein L20. This chain is Large ribosomal subunit protein bL21, found in Acidothermus cellulolyticus (strain ATCC 43068 / DSM 8971 / 11B).